The chain runs to 274 residues: Bis(5'-nucleosyl)-tetraphosphatase, symmetrical (274 aa).

It belongs to the Ap4A hydrolase family.

The enzyme catalyses P(1),P(4)-bis(5'-adenosyl) tetraphosphate + H2O = 2 ADP + 2 H(+). Its function is as follows. Hydrolyzes diadenosine 5',5'''-P1,P4-tetraphosphate to yield ADP. This Buchnera aphidicola subsp. Acyrthosiphon pisum (strain APS) (Acyrthosiphon pisum symbiotic bacterium) protein is Bis(5'-nucleosyl)-tetraphosphatase, symmetrical (apaH).